A 98-amino-acid polypeptide reads, in one-letter code: NADH-ubiquinone oxidoreductase chain 4L (98 aa).

3 helical membrane passes run 1-21 (MPST…GLLL), 29-49 (SLLC…LMAL), and 61-81 (IVLM…LVMV).

Belongs to the complex I subunit 4L family. In terms of assembly, core subunit of respiratory chain NADH dehydrogenase (Complex I) which is composed of 45 different subunits.

It localises to the mitochondrion inner membrane. The catalysed reaction is a ubiquinone + NADH + 5 H(+)(in) = a ubiquinol + NAD(+) + 4 H(+)(out). Its function is as follows. Core subunit of the mitochondrial membrane respiratory chain NADH dehydrogenase (Complex I) which catalyzes electron transfer from NADH through the respiratory chain, using ubiquinone as an electron acceptor. Part of the enzyme membrane arm which is embedded in the lipid bilayer and involved in proton translocation. This Choloepus didactylus (Southern two-toed sloth) protein is NADH-ubiquinone oxidoreductase chain 4L (MT-ND4L).